Reading from the N-terminus, the 317-residue chain is MKVLWAALLVTFLAGCQAKVEQVVETEPEPELHQQAEWQSGQRWELALGHFWDYLRWVQTLSEQVQEELLSSQVTQELTALMDETMKELKAYKSELEEQLTPVAEETRARLSKELQAAQARLGADMEDVRGRLVQYRGEVQAMLGQSTEELRARLASHLRKLRKRLLRDADDLQKRLAVYQAGAREGAERGVSAIRERLGPLVEQGRVRAATVGSLAGQPLQERAQAWGERLRARMEEMGSRTRDRLDEVKEQVAEVRAKLEEQAQQIRLQAEAFQARLKSWFEPLVEDMQRQWAGLVEKVQAAMGTSAAPVPSDNH.

Positions 1-18 (MKVLWAALLVTFLAGCQA) are cleaved as a signal peptide. 8 consecutive repeat copies span residues 80 to 101 (ALMDETMKELKAYKSELEEQLT), 102 to 123 (PVAEETRARLSKELQAAQARLG), 124 to 145 (ADMEDVRGRLVQYRGEVQAMLG), 146 to 167 (QSTEELRARLASHLRKLRKRLL), 168 to 189 (RDADDLQKRLAVYQAGAREGAE), 190 to 211 (RGVSAIRERLGPLVEQGRVRAA), 212 to 233 (TVGSLAGQPLQERAQAWGERLR), and 234 to 255 (ARMEEMGSRTRDRLDEVKEQVA). Residues 80-255 (ALMDETMKEL…RLDEVKEQVA (176 aa)) form an 8 X 22 AA approximate tandem repeats region. Met143 is subject to Methionine sulfoxide. Phosphoserine is present on Ser147. The interval 158 to 168 (HLRKLRKRLLR) is LDL and other lipoprotein receptors binding. Residue 162–165 (LRKR) coordinates heparin. The lipid-binding and lipoprotein association stretch occupies residues 210 to 290 (AATVGSLAGQ…SWFEPLVEDM (81 aa)). Heparin is bound at residue 229 to 236 (GERLRARM). Residues 266–317 (QQIRLQAEAFQARLKSWFEPLVEDMQRQWAGLVEKVQAAMGTSAAPVPSDNH) are homooligomerization. The interval 278-290 (RLKSWFEPLVEDM) is specificity for association with VLDL.

The protein belongs to the apolipoprotein A1/A4/E family. In terms of assembly, homotetramer. May interact with ABCA1; functionally associated with ABCA1 in the biogenesis of HDLs. May interact with APP/A4 amyloid-beta peptide; the interaction is extremely stable in vitro but its physiological significance is unclear. May interact with MAPT. May interact with MAP2. In the cerebrospinal fluid, interacts with secreted SORL1. Interacts with PMEL; this allows the loading of PMEL luminal fragment on ILVs to induce fibril nucleation. Post-translationally, APOE exists as multiple glycosylated and sialylated glycoforms within cells and in plasma. The extent of glycosylation and sialylation are tissue and context specific. Glycated in plasma VLDL. In terms of processing, phosphorylated by FAM20C in the extracellular medium.

It localises to the secreted. The protein localises to the extracellular space. It is found in the extracellular matrix. Its subcellular location is the extracellular vesicle. The protein resides in the endosome. It localises to the multivesicular body. Functionally, APOE is an apolipoprotein, a protein associating with lipid particles, that mainly functions in lipoprotein-mediated lipid transport between organs via the plasma and interstitial fluids. APOE is a core component of plasma lipoproteins and is involved in their production, conversion and clearance. Apolipoproteins are amphipathic molecules that interact both with lipids of the lipoprotein particle core and the aqueous environment of the plasma. As such, APOE associates with chylomicrons, chylomicron remnants, very low density lipoproteins (VLDL) and intermediate density lipoproteins (IDL) but shows a preferential binding to high-density lipoproteins (HDL). It also binds a wide range of cellular receptors including the LDL receptor/LDLR, the LDL receptor-related proteins LRP1, LRP2 and LRP8 and the very low-density lipoprotein receptor/VLDLR that mediate the cellular uptake of the APOE-containing lipoprotein particles. Finally, APOE also has a heparin-binding activity and binds heparan-sulfate proteoglycans on the surface of cells, a property that supports the capture and the receptor-mediated uptake of APOE-containing lipoproteins by cells. A main function of APOE is to mediate lipoprotein clearance through the uptake of chylomicrons, VLDLs, and HDLs by hepatocytes. APOE is also involved in the biosynthesis by the liver of VLDLs as well as their uptake by peripheral tissues ensuring the delivery of triglycerides and energy storage in muscle, heart and adipose tissues. By participating in the lipoprotein-mediated distribution of lipids among tissues, APOE plays a critical role in plasma and tissues lipid homeostasis. APOE is also involved in two steps of reverse cholesterol transport, the HDLs-mediated transport of cholesterol from peripheral tissues to the liver, and thereby plays an important role in cholesterol homeostasis. First, it is functionally associated with ABCA1 in the biogenesis of HDLs in tissues. Second, it is enriched in circulating HDLs and mediates their uptake by hepatocytes. APOE also plays an important role in lipid transport in the central nervous system, regulating neuron survival and sprouting. This Pan troglodytes (Chimpanzee) protein is Apolipoprotein E (APOE).